Consider the following 368-residue polypeptide: Endophilin-A2 (368 aa).

Residues 1–21 form a membrane-binding amphipathic helix region; that stretch reads MSVAGLKKQFYKASQLVSEKV. Positions 18–249 constitute a BAR domain; the sequence is SEKVGGAEGT…LKRRMREASS (232 aa). A required for dimerization upon membrane association region spans residues 60 to 87; sequence PNPASRAKLTMLNTVSKIRGQVKNPGYP. A coiled-coil region spans residues 145–250; it reads NLCEKDLKEI…KRRMREASSR (106 aa). Residues 218 to 254 are interaction with ARC; it reads LVDAQLDYHRQAVQILDELAEKLKRRMREASSRPKRE. A disordered region spans residues 244 to 308; that stretch reads MREASSRPKR…PSRSMPPLDQ (65 aa). Positions 245 to 263 are enriched in basic and acidic residues; the sequence is REASSRPKREYKPKPREPF. 2 positions are modified to phosphoserine: serine 288 and serine 292. Threonine 298 is subject to Phosphothreonine. The 60-residue stretch at 306–365 folds into the SH3 domain; that stretch reads LDQPSCKALYDFEPENDGELGFHEGDVITLTNQIDENWYEGMLDGQSGFFPLSYVEVLVP. Tyrosine 315 bears the Phosphotyrosine mark.

It belongs to the endophilin family. As to quaternary structure, interacts with ARC. Interacts with SYNJ1 and DNM1. Interacts with PDCD6IP. Interacts with BIN2. Ubiquitous. Higher expression in pancreas, placenta, prostate, testis and uterus.

It localises to the cytoplasm. The protein localises to the early endosome membrane. Its subcellular location is the cell projection. The protein resides in the podosome. Functionally, implicated in endocytosis. May recruit other proteins to membranes with high curvature. This chain is Endophilin-A2 (SH3GL1), found in Homo sapiens (Human).